Reading from the N-terminus, the 413-residue chain is Oxidoreductase vrtI (413 aa).

The Fe2OG dioxygenase domain maps to 235–341 (DAESLTTLSM…RYSIAYFLRA (107 aa)). The Fe cation site is built by histidine 262, aspartate 264, and histidine 319. Arginine 332 is a binding site for 2-oxoglutarate.

Belongs to the iron/ascorbate-dependent oxidoreductase family.

It participates in secondary metabolite biosynthesis; terpenoid biosynthesis. Its function is as follows. Oxidoreductase; part of the gene cluster that mediates the biosynthesis of viridicatumtoxin, a tetracycline-like fungal meroterpenoid with a unique, fused spirobicyclic ring system. The first step of the pathway is the production of the malonamoyl-CoA starter unit for the polyketide synthase vrtA. The aldolase vrtJ may be involved in the synthesis of the malonamate substrate for malonamoyl-CoA synthetase vrtB. The polyketide synthase vrtA then may utilize the malonamoyl-CoA starter unit, followed by sequential condensation of eight malonyl-CoA units to form the polyketide backbone. The cyclization of the last ring could be mediated by the lactamase-like protein vrtG. The proposed post-PKS tailoring steps are a hydroxylation at C5 catalyzed the cytochrome P450 monooxygenase vrtE, a hydroxylation at C12a catalyzed by VrtH and/or VrtI, and an O-methylation by the O-methyltransferase vrtF. VrtC is then proposed to catalyze the transfer of a geranyl group synthesized by vrtD to the aromatic C ring of the tetracyclic polyketide intermediate of viridicatumtoxin to yield previridicatumtoxin. Finally, the cytochrome P450 monooxygenase vrtK catalyzes the spirocyclization of the geranyl moiety of previridicatumtoxin to afford viridicatumtoxin. The chain is Oxidoreductase vrtI from Penicillium aethiopicum.